Here is a 356-residue protein sequence, read N- to C-terminus: MKVQQYRLDELTHLVKGELIGEGSLQFSNLASLENAEVNHLTFVNGEKHLDQAKVSRAGAYIVTAALKEHLPEKDNFIIVDNPYLAFAILTHVFDKKISSTGIESTAQIHPSAVISETAYIGHYVVIGENCVVGDNTVIQSHTKLDDNVEVGKDCFIDSHVTITGGSKLRDRVRIHSSTVIGGEGFGFAPYQGKWHRIAQLGSVLIGNDVRIGSNCSIDRGALDNTILEDGVIIDNLVQIAHNVHIGSNTAIAAKCGIAGSTKIGKNCILAGACGVAGHLSIADNVTLTGMSMVTKNISEAGTYSSGTGLFENNHWKKTIVRLRQLADVPLTQITKRLDHIQAQIESLESTFNLRK.

H242 (proton acceptor) is an active-site residue.

It belongs to the transferase hexapeptide repeat family. LpxD subfamily. In terms of assembly, homotrimer.

The catalysed reaction is a UDP-3-O-[(3R)-3-hydroxyacyl]-alpha-D-glucosamine + a (3R)-hydroxyacyl-[ACP] = a UDP-2-N,3-O-bis[(3R)-3-hydroxyacyl]-alpha-D-glucosamine + holo-[ACP] + H(+). It functions in the pathway bacterial outer membrane biogenesis; LPS lipid A biosynthesis. Its function is as follows. Catalyzes the N-acylation of UDP-3-O-acylglucosamine using 3-hydroxyacyl-ACP as the acyl donor. Is involved in the biosynthesis of lipid A, a phosphorylated glycolipid that anchors the lipopolysaccharide to the outer membrane of the cell. The sequence is that of UDP-3-O-acylglucosamine N-acyltransferase from Acinetobacter baumannii (strain AB0057).